The primary structure comprises 251 residues: Ubiquinone/menaquinone biosynthesis C-methyltransferase UbiE (251 aa).

S-adenosyl-L-methionine is bound by residues Thr74, Asp95, 123-124, and Ser140; that span reads NA.

It belongs to the class I-like SAM-binding methyltransferase superfamily. MenG/UbiE family.

The catalysed reaction is a 2-demethylmenaquinol + S-adenosyl-L-methionine = a menaquinol + S-adenosyl-L-homocysteine + H(+). It carries out the reaction a 2-methoxy-6-(all-trans-polyprenyl)benzene-1,4-diol + S-adenosyl-L-methionine = a 5-methoxy-2-methyl-3-(all-trans-polyprenyl)benzene-1,4-diol + S-adenosyl-L-homocysteine + H(+). It functions in the pathway quinol/quinone metabolism; menaquinone biosynthesis; menaquinol from 1,4-dihydroxy-2-naphthoate: step 2/2. Its pathway is cofactor biosynthesis; ubiquinone biosynthesis. Functionally, methyltransferase required for the conversion of demethylmenaquinol (DMKH2) to menaquinol (MKH2) and the conversion of 2-polyprenyl-6-methoxy-1,4-benzoquinol (DDMQH2) to 2-polyprenyl-3-methyl-6-methoxy-1,4-benzoquinol (DMQH2). The sequence is that of Ubiquinone/menaquinone biosynthesis C-methyltransferase UbiE from Yersinia pestis bv. Antiqua (strain Angola).